Reading from the N-terminus, the 134-residue chain is Large ribosomal subunit protein uL14 (134 aa).

The protein belongs to the universal ribosomal protein uL14 family. Part of the 50S ribosomal subunit. Forms a cluster with proteins L3 and L19. In the 70S ribosome, L14 and L19 interact and together make contacts with the 16S rRNA in bridges B5 and B8.

Binds to 23S rRNA. Forms part of two intersubunit bridges in the 70S ribosome. The polypeptide is Large ribosomal subunit protein uL14 (Deinococcus geothermalis (strain DSM 11300 / CIP 105573 / AG-3a)).